Reading from the N-terminus, the 269-residue chain is Phosphate import ATP-binding protein PstB 2 (269 aa).

Residues 23–264 enclose the ABC transporter domain; it reads LEVKDLSIYY…PKKQKTEDYI (242 aa). ATP is bound at residue 55-62; the sequence is GPSGCGKS.

This sequence belongs to the ABC transporter superfamily. Phosphate importer (TC 3.A.1.7) family. The complex is composed of two ATP-binding proteins (PstB), two transmembrane proteins (PstC and PstA) and a solute-binding protein (PstS).

Its subcellular location is the cell membrane. The enzyme catalyses phosphate(out) + ATP + H2O = ADP + 2 phosphate(in) + H(+). In terms of biological role, part of the ABC transporter complex PstSACB involved in phosphate import. Responsible for energy coupling to the transport system. This is Phosphate import ATP-binding protein PstB 2 from Bacillus subtilis (strain 168).